A 504-amino-acid chain; its full sequence is Deoxyguanosinetriphosphate triphosphohydrolase (504 aa).

The 208-residue stretch at Arg66–Cys273 folds into the HD domain.

This sequence belongs to the dGTPase family. Type 1 subfamily. In terms of assembly, homotetramer. The cofactor is Mg(2+).

The catalysed reaction is dGTP + H2O = 2'-deoxyguanosine + triphosphate + H(+). DGTPase preferentially hydrolyzes dGTP over the other canonical NTPs. In Enterobacter sp. (strain 638), this protein is Deoxyguanosinetriphosphate triphosphohydrolase.